Consider the following 211-residue polypeptide: Shikimate kinase (211 aa).

The tract at residues 1-22 (MHFRYNYRMQRSKTPNTKNSDT) is disordered. Positions 12-22 (SKTPNTKNSDT) are enriched in polar residues. 36-41 (GSGKTT) serves as a coordination point for ATP. Mg(2+) is bound at residue Thr40. Substrate is bound by residues Asp58, Arg82, and Gly104. Residue Arg142 participates in ATP binding. Arg161 is a binding site for substrate. Gln178 is an ATP binding site.

Belongs to the shikimate kinase family. In terms of assembly, monomer. The cofactor is Mg(2+).

It localises to the cytoplasm. The enzyme catalyses shikimate + ATP = 3-phosphoshikimate + ADP + H(+). The protein operates within metabolic intermediate biosynthesis; chorismate biosynthesis; chorismate from D-erythrose 4-phosphate and phosphoenolpyruvate: step 5/7. Functionally, catalyzes the specific phosphorylation of the 3-hydroxyl group of shikimic acid using ATP as a cosubstrate. The polypeptide is Shikimate kinase (Nitrosomonas europaea (strain ATCC 19718 / CIP 103999 / KCTC 2705 / NBRC 14298)).